The following is a 245-amino-acid chain: Small ribosomal subunit protein uS2 (245 aa).

This sequence belongs to the universal ribosomal protein uS2 family.

This is Small ribosomal subunit protein uS2 from Pseudomonas putida (strain GB-1).